The chain runs to 438 residues: ATP phosphoribosyltransferase regulatory subunit (438 aa).

The protein belongs to the class-II aminoacyl-tRNA synthetase family. HisZ subfamily. Heteromultimer composed of HisG and HisZ subunits.

It localises to the cytoplasm. The protein operates within amino-acid biosynthesis; L-histidine biosynthesis; L-histidine from 5-phospho-alpha-D-ribose 1-diphosphate: step 1/9. In terms of biological role, required for the first step of histidine biosynthesis. May allow the feedback regulation of ATP phosphoribosyltransferase activity by histidine. This chain is ATP phosphoribosyltransferase regulatory subunit, found in Geobacter sulfurreducens (strain ATCC 51573 / DSM 12127 / PCA).